A 236-amino-acid polypeptide reads, in one-letter code: Lipoprotein signal peptidase (236 aa).

4 helical membrane passes run 8–28, 44–64, 68–88, and 98–118; these read FYGI…WVYF, WFKL…FGFT, VLLT…IWNL, and LLWG…DSIF. Residues D141 and D174 contribute to the active site. Residues 166–186 traverse the membrane as a helical segment; that stretch reads CLPVFNLADVAILAGVALIVL.

It belongs to the peptidase A8 family.

It localises to the cell inner membrane. The enzyme catalyses Release of signal peptides from bacterial membrane prolipoproteins. Hydrolyzes -Xaa-Yaa-Zaa-|-(S,diacylglyceryl)Cys-, in which Xaa is hydrophobic (preferably Leu), and Yaa (Ala or Ser) and Zaa (Gly or Ala) have small, neutral side chains.. It functions in the pathway protein modification; lipoprotein biosynthesis (signal peptide cleavage). Functionally, this protein specifically catalyzes the removal of signal peptides from prolipoproteins. This chain is Lipoprotein signal peptidase, found in Amoebophilus asiaticus (strain 5a2).